The chain runs to 201 residues: ATP-dependent Clp protease proteolytic subunit (201 aa).

Catalysis depends on Ser-101, which acts as the Nucleophile. The active site involves His-126.

This sequence belongs to the peptidase S14 family. Component of the chloroplastic Clp protease core complex.

Its subcellular location is the plastid. It localises to the chloroplast stroma. It catalyses the reaction Hydrolysis of proteins to small peptides in the presence of ATP and magnesium. alpha-casein is the usual test substrate. In the absence of ATP, only oligopeptides shorter than five residues are hydrolyzed (such as succinyl-Leu-Tyr-|-NHMec, and Leu-Tyr-Leu-|-Tyr-Trp, in which cleavage of the -Tyr-|-Leu- and -Tyr-|-Trp bonds also occurs).. In terms of biological role, cleaves peptides in various proteins in a process that requires ATP hydrolysis. Has a chymotrypsin-like activity. Plays a major role in the degradation of misfolded proteins. The protein is ATP-dependent Clp protease proteolytic subunit of Chlorella vulgaris (Green alga).